Reading from the N-terminus, the 118-residue chain is Large ribosomal subunit protein bL19 (118 aa).

This sequence belongs to the bacterial ribosomal protein bL19 family.

In terms of biological role, this protein is located at the 30S-50S ribosomal subunit interface and may play a role in the structure and function of the aminoacyl-tRNA binding site. This is Large ribosomal subunit protein bL19 from Aliarcobacter butzleri (strain RM4018) (Arcobacter butzleri).